The sequence spans 343 residues: uncharacterized protein (343 aa).

It belongs to the IIV-6 219L family.

This is an uncharacterized protein from Invertebrate iridescent virus 6 (IIV-6).